The primary structure comprises 194 residues: Peptidyl-tRNA hydrolase (194 aa).

Tyrosine 17 contributes to the tRNA binding site. Histidine 22 (proton acceptor) is an active-site residue. Residues phenylalanine 68, asparagine 70, and asparagine 116 each coordinate tRNA.

The protein belongs to the PTH family. Monomer.

The protein localises to the cytoplasm. It catalyses the reaction an N-acyl-L-alpha-aminoacyl-tRNA + H2O = an N-acyl-L-amino acid + a tRNA + H(+). In terms of biological role, hydrolyzes ribosome-free peptidyl-tRNAs (with 1 or more amino acids incorporated), which drop off the ribosome during protein synthesis, or as a result of ribosome stalling. Catalyzes the release of premature peptidyl moieties from peptidyl-tRNA molecules trapped in stalled 50S ribosomal subunits, and thus maintains levels of free tRNAs and 50S ribosomes. The polypeptide is Peptidyl-tRNA hydrolase (Actinobacillus pleuropneumoniae serotype 5b (strain L20)).